Consider the following 195-residue polypeptide: 22.0 kDa heat shock protein (195 aa).

The N-terminal stretch at 1-21 (MMKHLLSIFFIGALLLGNIKT) is a signal peptide. The region spanning 62 to 180 (RDTSVALSPA…GPRVVNIAAE (119 aa)) is the sHSP domain. Asparagine 160 carries N-linked (GlcNAc...) asparagine glycosylation.

Belongs to the small heat shock protein (HSP20) family. As to quaternary structure, may form oligomeric structures.

It localises to the endoplasmic reticulum. The chain is 22.0 kDa heat shock protein (HSP22.0) from Arabidopsis thaliana (Mouse-ear cress).